The chain runs to 300 residues: Formate dehydrogenase-O iron-sulfur subunit (300 aa).

Residues 1–260 (MAYQSQDIIR…KFWKGIWKPL (260 aa)) lie on the Cytoplasmic side of the membrane. 4Fe-4S ferredoxin-type domains follow at residues 30-60 (VAKLIDVTTCIGCKACQVACSEWNDIRDTVG), 91-123 (LEWLIRKDGCMHCSDPGCLKACPAEGAIIQYAN), 124-153 (GIVDFQSEQCIGCGYCIAGCPFDIPRLNPE), and 158-189 (YKCTLCVDRVVVGQEPACVKTCPTGAIHFGTK). C39, C42, C45, C49, C100, C103, C108, C112, C133, C136, C139, C143, C160, C163, C175, and C179 together coordinate [4Fe-4S] cluster. The helical transmembrane segment at 261-279 (AAVGFAATFAASIFHYVGV) threads the bilayer. At 280–300 (GPNRADEEENNLHEEKDEERK) the chain is on the periplasmic side.

As to quaternary structure, formate dehydrogenase is a membrane-bound complex, formed by subunits alpha, beta and gamma. It depends on [4Fe-4S] cluster as a cofactor.

It localises to the cell membrane. In terms of biological role, allows to use formate as major electron donor during aerobic respiration. The beta chain is an electron transfer unit containing 4 cysteine clusters involved in the formation of iron-sulfur centers. Electrons are transferred from the gamma chain to the molybdenum cofactor of the alpha subunit. This is Formate dehydrogenase-O iron-sulfur subunit (fdoH) from Escherichia coli (strain K12).